The primary structure comprises 462 residues: Protein phosphatase 1M (462 aa).

Residues 1 to 10 (MSAGWFRRRF) are compositionally biased toward basic residues. The interval 1–66 (MSAGWFRRRF…PVRSPARGRT (66 aa)) is disordered. Residues 100-452 (EFGIEEDQEW…DDVSVFVIPL (353 aa)) form the PPM-type phosphatase domain. Positions 127 and 128 each coordinate Mn(2+).

Belongs to the PP2C family. It depends on Mg(2+) as a cofactor. Mn(2+) serves as cofactor. Widely expressed with highest levels in testis and lower levels in lung, kidney and brain.

It localises to the nucleus. The enzyme catalyses O-phospho-L-seryl-[protein] + H2O = L-seryl-[protein] + phosphate. It carries out the reaction O-phospho-L-threonyl-[protein] + H2O = L-threonyl-[protein] + phosphate. This chain is Protein phosphatase 1M, found in Mus musculus (Mouse).